Consider the following 832-residue polypeptide: Mechanosensitive cation channel TMEM63B (832 aa).

The Extracellular portion of the chain corresponds to 1–40 (MLPFLLATLGTAALNSSNPKDYCYSARIRSTVLQGLPFGG). The chain crosses the membrane as a helical span at residues 41–65 (VPTVLALDFMCFLALLFLFSILRKV). A lipid anchor (S-palmitoyl cysteine) is attached at cysteine 51. At 66-145 (AWDYGRLALV…KDDEIRDKCG (80 aa)) the chain is on the cytoplasmic side. The Mediates endoplasmic reticulum retention signature appears at 86-88 (RER). Phosphoserine occurs at positions 111, 113, 114, and 115. The S-palmitoyl cysteine moiety is linked to residue cysteine 126. The chain crosses the membrane as a helical span at residues 146-178 (GDAVHYLSFQRHIIGLLVVVGVLSVGIVLPVNF). Topologically, residues 179-202 (SGDLLENNAYSFGRTTIANLKSGN) are extracellular. The helical transmembrane segment at 203 to 227 (NLLWLHTSFAFLYLLLTVYSMRRHT) threads the bilayer. Topologically, residues 228–427 (SKMRYKEDDL…IYWEHLSIRG (200 aa)) are cytoplasmic. Positions 231–426 (RYKEDDLVKR…NIYWEHLSIR (196 aa)) are intracellular linker IL2; confers mechanosensitivity. S-palmitoyl cysteine attachment occurs at residues cysteine 382 and cysteine 398. The helical transmembrane segment at 428–457 (FIWWLRCLVINVVLFILLFFLTTPAIIITT) threads the bilayer. Residues 458-472 (MDKFNVTKPVEYLNN) lie on the Extracellular side of the membrane. Asparagine 462 carries an N-linked (GlcNAc...) asparagine glycan. Residues 473-502 (PIITQFFPTLLLWCFSALLPTIVYYSAFFE) form a helical membrane-spanning segment. The Cytoplasmic portion of the chain corresponds to 503-506 (AHWT). The chain crosses the membrane as a helical span at residues 507-543 (RSGENRTTMHKCYTFLIFMVLLLPSLGLSSLDLFFRW). Over 544–566 (LFDKKFLAEAAIRFECVFLPDNG) the chain is Extracellular. The chain crosses the membrane as a helical span at residues 567-599 (AFFVNYVIASAFIGNAMDLLRIPGLLMYMIRLC). The tract at residues 567–599 (AFFVNYVIASAFIGNAMDLLRIPGLLMYMIRLC) is gating helix. Topologically, residues 600-619 (LARSAAERRNVKRHQAYEFQ) are cytoplasmic. A helical transmembrane segment spans residues 620–638 (FGAAYAWMMCVFTVVMTYS). Residues 639–641 (ITC) lie on the Extracellular side of the membrane. Residues 642 to 666 (PIIVPFGLMYMLLKHLVDRYNLYYA) form a helical membrane-spanning segment. Residues 667–673 (YLPAKLD) are Cytoplasmic-facing. The helical transmembrane segment at 674–702 (KKIHSGAVNQVVAAPILCLFWLLFFSTMR) threads the bilayer. The Extracellular portion of the chain corresponds to 703–707 (TGFLA). A helical transmembrane segment spans residues 708 to 728 (PTSMFTFVVLVITIVICLCHV). S-palmitoyl cysteine attachment occurs at residues cysteine 726 and cysteine 729. Residues 729–832 (CFGHFKYLSA…DSLIENEIHQ (104 aa)) are Cytoplasmic-facing. Disordered stretches follow at residues 748–767 (TDAV…AVPK) and 776–818 (LQDS…DTDF). Residues 749-758 (DAVSSRSNGR) show a composition bias toward polar residues. Residues 789–801 (PGSSGDEPPSSSS) are compositionally biased toward low complexity.

It belongs to the CSC1 (TC 1.A.17) family. Monomer. Interacts with SLC19A2; interaction is required for the phospholipid scramblase activity. Post-translationally, palmitoylation is required for localization to the plasma membrane and stability. Expressed in cochlear hair cells (at protein level). Highly expressed in the subfornical organ of the brain. Expressed in small intestine. In terms of tissue distribution, brain-specific.

It is found in the cell membrane. Its subcellular location is the endoplasmic reticulum membrane. The protein resides in the lysosome membrane. It localises to the early endosome membrane. The catalysed reaction is Ca(2+)(in) = Ca(2+)(out). The enzyme catalyses Mg(2+)(in) = Mg(2+)(out). It catalyses the reaction K(+)(in) = K(+)(out). It carries out the reaction Na(+)(in) = Na(+)(out). The catalysed reaction is Cs(+)(in) = Cs(+)(out). The enzyme catalyses a 1,2-diacyl-sn-glycero-3-phosphocholine(in) = a 1,2-diacyl-sn-glycero-3-phosphocholine(out). It catalyses the reaction a sphingomyelin(in) = a sphingomyelin(out). Its function is as follows. Mechanosensitive cation channel with low conductance and high activation threshold. Osmosensitive cation channel preferentially activated by hypotonic stress. Also acts as a phospholipid scramblase in response to changes in membrane structure: upon changes in membrane curvature and thickness, alters its conformation and translocates phospholipids, such as phosphatidylcholine and sphingomyelin, thereby controlling plasma membrane lipid distribution. Forms a heterodimer with SLC19A2, which mediates phospholipid scramblase activity following Ca(2+) stimulation. Expressed in excitatory neurons of the subfornical organ and functions as a thirst receptor that mediates neuronal response to hyperosmolality to drive thirst and drinking behavior. Facilitates intestinal motility by promoting proliferation of intestinal stem cells. Essential for the baby's first breath and respiration throughout life. Upon lung inflation conducts cation currents in alveolar type 1 and 2 cells triggering lamellar body exocytosis and surfactant secretion into airspace. Acts as an osmosensor in cochlear outer hair cells (OHCs) where it mediates calcium influx and regulatory volume decrease response. Required for the maintenance of OHC morphology, OHC survival and normal hearing. Functionally, brain-specific osmosensitive calcium channel isoform. The chain is Mechanosensitive cation channel TMEM63B from Mus musculus (Mouse).